A 300-amino-acid chain; its full sequence is Bifunctional protein FolD 2 (300 aa).

Residues 166–168 (GRS), S191, and I232 each bind NADP(+).

Belongs to the tetrahydrofolate dehydrogenase/cyclohydrolase family. Homodimer.

It catalyses the reaction (6R)-5,10-methylene-5,6,7,8-tetrahydrofolate + NADP(+) = (6R)-5,10-methenyltetrahydrofolate + NADPH. It carries out the reaction (6R)-5,10-methenyltetrahydrofolate + H2O = (6R)-10-formyltetrahydrofolate + H(+). It participates in one-carbon metabolism; tetrahydrofolate interconversion. In terms of biological role, catalyzes the oxidation of 5,10-methylenetetrahydrofolate to 5,10-methenyltetrahydrofolate and then the hydrolysis of 5,10-methenyltetrahydrofolate to 10-formyltetrahydrofolate. The chain is Bifunctional protein FolD 2 from Roseobacter denitrificans (strain ATCC 33942 / OCh 114) (Erythrobacter sp. (strain OCh 114)).